Here is a 320-residue protein sequence, read N- to C-terminus: AA9 family lytic polysaccharide monooxygenase-like protein CEL1 (320 aa).

An N-terminal signal peptide occupies residues 1–29; the sequence is MRLPSRQQVLKMLATFSLALGLFAAKVQA. 2 disulfide bridges follow: Cys-78–Cys-199 and Cys-121–Cys-126. His-109 contacts Cu(2+). Asn-163 carries N-linked (GlcNAc...) asparagine glycosylation. Residues His-189 and Gln-194 each contribute to the O2 site. Tyr-196 is a binding site for Cu(2+). The disordered stretch occupies residues 255-284; that stretch reads GSGGNGGSPTTTPHTTTPITTSPPPTSTPG. Residues 262–274 are compositionally biased toward low complexity; the sequence is SPTTTPHTTTPIT. One can recognise a CBM1 domain in the interval 284–320; that stretch reads GTIPQYGQCGGIGWTGGTGCVAPYQCKVINDYYSQCL.

It belongs to the polysaccharide monooxygenase AA9 family. The cofactor is Cu(2+).

The protein resides in the secreted. It catalyses the reaction [(1-&gt;4)-beta-D-glucosyl]n+m + reduced acceptor + O2 = 4-dehydro-beta-D-glucosyl-[(1-&gt;4)-beta-D-glucosyl]n-1 + [(1-&gt;4)-beta-D-glucosyl]m + acceptor + H2O.. Functionally, lytic polysaccharide monooxygenase (LPMO)-like protein that binds strongly to cellulose. Seems not to acts as an endoglucanase, a ceUobiohydrolase able to hydrolyze fluorogenic cellobiosides, a /3-glucosidase, a xylanase, nor a cellobiose:quinone oxidoreductase. In Agaricus bisporus (White button mushroom), this protein is AA9 family lytic polysaccharide monooxygenase-like protein CEL1.